The following is a 462-amino-acid chain: Serine--tRNA ligase, cytoplasmic (462 aa).

246–248 (TSE) serves as a coordination point for L-serine. ATP is bound by residues 279–281 (RRE) and V295. E302 lines the L-serine pocket. 366 to 369 (ELVS) is a binding site for ATP. T404 contributes to the L-serine binding site.

This sequence belongs to the class-II aminoacyl-tRNA synthetase family. Type-1 seryl-tRNA synthetase subfamily. Homodimer. The tRNA molecule binds across the dimer.

The protein localises to the cytoplasm. The protein resides in the cytosol. The enzyme catalyses tRNA(Ser) + L-serine + ATP = L-seryl-tRNA(Ser) + AMP + diphosphate + H(+). Its function is as follows. Catalyzes the attachment of serine to tRNA(Ser) in a two-step reaction: serine is first activated by ATP to form Ser-AMP and then transferred to the acceptor end of tRNA(Ser). The sequence is that of Serine--tRNA ligase, cytoplasmic (SES1) from Candida albicans (strain SC5314 / ATCC MYA-2876) (Yeast).